Reading from the N-terminus, the 144-residue chain is Large ribosomal subunit protein uL15 (144 aa).

A disordered region spans residues 1–49 (MRLNTLSPAAGAKSAAKRVGRGIGSGTGKTCGRGHKGQKSRSGGGVRVG). Gly residues predominate over residues 21–31 (RGIGSGTGKTC).

This sequence belongs to the universal ribosomal protein uL15 family. In terms of assembly, part of the 50S ribosomal subunit.

Its function is as follows. Binds to the 23S rRNA. The protein is Large ribosomal subunit protein uL15 of Shewanella sediminis (strain HAW-EB3).